Here is a 109-residue protein sequence, read N- to C-terminus: U4-lycotoxin-Ls1a (109 aa).

An N-terminal signal peptide occupies residues 1–22; the sequence is MKVLVLFSVLFLTLFSYSSTEA. Residues 23 to 44 constitute a propeptide that is removed on maturation; it reads IDEFDSDAEDDMLSLMANEQVR. Residues 45–88 form a knottin domain region; that stretch reads AKACTPRLHDCSHDRHSCCRGELFKDVCYCFYPEGEDKTEVCSC. Cystine bridges form between C48/C63, C55/C72, C62/C88, and C74/C86. Residues 89–108 form a linear cationic cytotoxin domain region; that stretch reads QQPKSHKYIEKVVDKAKTVV.

The protein belongs to the neurotoxin 19 (CSTX) family. 05 (U4-Lctx) subfamily. In terms of tissue distribution, expressed by the venom gland.

The protein resides in the secreted. In terms of biological role, enhances the high-affinity desensitization of human P2RX3 purinoceptors. The polypeptide is U4-lycotoxin-Ls1a (Lycosa singoriensis (Wolf spider)).